A 248-amino-acid polypeptide reads, in one-letter code: Type II restriction enzyme XhoI (248 aa).

This sequence belongs to the XhoI type II restriction endonuclease family.

The enzyme catalyses Endonucleolytic cleavage of DNA to give specific double-stranded fragments with terminal 5'-phosphates.. In terms of biological role, a P subtype restriction enzyme that recognizes the double-stranded sequence 5'-CTCGAG-3' and cleaves after C-1. The sequence is that of Type II restriction enzyme XhoI from Xanthomonas vasicola.